The following is a 186-amino-acid chain: Transcription factor FapR (186 aa).

Belongs to the FapR family.

Functionally, transcriptional factor involved in regulation of membrane lipid biosynthesis by repressing genes involved in fatty acid and phospholipid metabolism. This Halalkalibacterium halodurans (strain ATCC BAA-125 / DSM 18197 / FERM 7344 / JCM 9153 / C-125) (Bacillus halodurans) protein is Transcription factor FapR.